We begin with the raw amino-acid sequence, 456 residues long: Adenylosuccinate lyase (456 aa).

N(6)-(1,2-dicarboxyethyl)-AMP is bound by residues 15–16, 90–92, and 122–123; these read RY, NHD, and TS. The Proton donor/acceptor role is filled by histidine 171. Glutamine 247 contacts N(6)-(1,2-dicarboxyethyl)-AMP. Serine 295 serves as the catalytic Proton donor/acceptor. N(6)-(1,2-dicarboxyethyl)-AMP-binding positions include serine 296, 301-303, asparagine 309, arginine 335, and 340-344; these read KVN and STVLR.

Belongs to the lyase 1 family. Adenylosuccinate lyase subfamily. Homotetramer. Residues from neighboring subunits contribute catalytic and substrate-binding residues to each active site.

It carries out the reaction N(6)-(1,2-dicarboxyethyl)-AMP = fumarate + AMP. The catalysed reaction is (2S)-2-[5-amino-1-(5-phospho-beta-D-ribosyl)imidazole-4-carboxamido]succinate = 5-amino-1-(5-phospho-beta-D-ribosyl)imidazole-4-carboxamide + fumarate. Its pathway is purine metabolism; AMP biosynthesis via de novo pathway; AMP from IMP: step 2/2. It participates in purine metabolism; IMP biosynthesis via de novo pathway; 5-amino-1-(5-phospho-D-ribosyl)imidazole-4-carboxamide from 5-amino-1-(5-phospho-D-ribosyl)imidazole-4-carboxylate: step 2/2. Its function is as follows. Catalyzes two reactions in de novo purine nucleotide biosynthesis. Catalyzes the breakdown of 5-aminoimidazole- (N-succinylocarboxamide) ribotide (SAICAR or 2-[5-amino-1-(5-phospho-beta-D-ribosyl)imidazole-4-carboxamido]succinate) to 5-aminoimidazole-4-carboxamide ribotide (AICAR or 5-amino-1-(5-phospho-beta-D-ribosyl)imidazole-4-carboxamide) and fumarate, and of adenylosuccinate (ADS or N(6)-(1,2-dicarboxyethyl)-AMP) to adenosine monophosphate (AMP) and fumarate. This chain is Adenylosuccinate lyase (purB), found in Haemophilus influenzae (strain ATCC 51907 / DSM 11121 / KW20 / Rd).